We begin with the raw amino-acid sequence, 236 residues long: Small ribosomal subunit protein uS3 (236 aa).

The KH type-2 domain occupies 39–107 (IREFLTEELK…DTSLNIVEVR (69 aa)). Positions 214–236 (ASERRAVEGDNQGSSSNRRRENA) are disordered.

Belongs to the universal ribosomal protein uS3 family. As to quaternary structure, part of the 30S ribosomal subunit. Forms a tight complex with proteins S10 and S14.

Its function is as follows. Binds the lower part of the 30S subunit head. Binds mRNA in the 70S ribosome, positioning it for translation. The polypeptide is Small ribosomal subunit protein uS3 (Brucella anthropi (strain ATCC 49188 / DSM 6882 / CCUG 24695 / JCM 21032 / LMG 3331 / NBRC 15819 / NCTC 12168 / Alc 37) (Ochrobactrum anthropi)).